A 795-amino-acid polypeptide reads, in one-letter code: MKFSELWLREWVNPAIDSDALANQITMAGLEVDGVEPVAGSFNGVVVGEVVECAQHPNADKLRVTKVNVGGERLLDIVCGAPNCRQGLKVAVATIGAILPGDFKIKAAKLRGEPSEGMLCSFSELGISDDHSGIIELPADAPLGTDIREYLKLDDNTIEISVTPNRADCLGIIGVARDVAVLNKAPLQEPEMAPVTATISDTLPITVEAADACPRYLGRVVKGINVNAPTPLWMKEKLRRCGIRSIDAVVDVTNYVLLELGQPMHAFDKDRIDGGIVVRMAKEGETVVLLDGSEATLNADTLVIADHHKALGIAGIFGGEHSGVNGETQNVLLECAYFNPLSITGRARRHGLHTDASHRYERGVDPALQYKAIERATRLLLDICGGDAGPIIDVSNEATLPKRATITLRRSKLDRLIGHHIADEQVSDILRRLGCEVTEGQDEWKAVAPTWRFDMEIEEDLVEEVVRVYGYNNIPDEPIQAGLIMGTHREADLSLKRVKTMLNDKGYQEVITYSFVDPKVQQLIHPGAEALLLPNPISVEMSAMRLSLWSGLLATVVYNQNRQQNRVRIFETGLRFVPDTQANLGIRQDLMLAGVICGNRYDEHWNLAKETVDFYDLKGDLEAVLDLTGKLGDIQFKAEMNPALHPGQSAAIYLKDERIGFIGVVHPELERKLDLNGRTLVFELEWNKLADRIVPQAREISRFPANRRDIAVVVAENVPAADILSECKKVGVNQVVGVNLFDVYRGKGVAEGYKSLAISLILQDTNRTLEEEEIAATVAKCVEALKERFQASLRD.

In terms of domain architecture, tRNA-binding spans 39-148; that stretch reads AGSFNGVVVG…ADAPLGTDIR (110 aa). A B5 domain is found at 401–476; it reads PKRATITLRR…RVYGYNNIPD (76 aa). Positions 454, 460, 463, and 464 each coordinate Mg(2+). In terms of domain architecture, FDX-ACB spans 701–794; sequence SRFPANRRDI…LKERFQASLR (94 aa).

This sequence belongs to the phenylalanyl-tRNA synthetase beta subunit family. Type 1 subfamily. As to quaternary structure, tetramer of two alpha and two beta subunits. Mg(2+) serves as cofactor.

The protein resides in the cytoplasm. The catalysed reaction is tRNA(Phe) + L-phenylalanine + ATP = L-phenylalanyl-tRNA(Phe) + AMP + diphosphate + H(+). This is Phenylalanine--tRNA ligase beta subunit from Salmonella paratyphi A (strain ATCC 9150 / SARB42).